Consider the following 469-residue polypeptide: Ribonuclease Y (469 aa).

Residues 6–26 (VTLILVGVIIFLFISLFFYVI) traverse the membrane as a helical segment. One can recognise a KH domain in the interval 149–209 (FSFTIKLENE…IRREKAKRTM (61 aa)). Positions 276 to 369 (VLLHCVEAAV…VKVVDKLSAS (94 aa)) constitute an HD domain.

It belongs to the RNase Y family.

It is found in the cell membrane. Functionally, endoribonuclease that initiates mRNA decay. The protein is Ribonuclease Y of Malacoplasma penetrans (strain HF-2) (Mycoplasma penetrans).